The sequence spans 623 residues: Protein EDS1 (623 aa).

Position 2 is an N-acetylalanine (alanine 2). Serine 123 acts as the Nucleophile in catalysis. Residues aspartate 187 and histidine 317 each act as charge relay system in the active site. Residues 358-383 (VQAALEEEKKRVENQKKIIQVIEQER) are a coiled coil.

As to quaternary structure, homodimer. Interacts with RPS4, RPS6, SNC1, SRFR1, AvrRps4 and HopA1. Part of a nuclear complex made of EDS1, PAD4 and SAG101, that can be redirected to the cytoplasm in the presence of an extranuclear form of EDS1. Interacts (via N-terminus) with PAD4 (via N-terminus). Interacts (via N-terminus) with SAG101. EDS1-SAG101 and EDS1-PAD4 form separate complexes in pathogen-unchallenged cells. Part of a nuclear protein complex made of VICTR, PAD4 and EDS1. Interacts with VICTR.

Its subcellular location is the nucleus. The protein resides in the cytoplasm. The protein localises to the microsome. Positive regulator of basal resistance and of effector-triggered immunity specifically mediated by TIR-NB-LRR (TNL) resistance proteins. Disruption by bacterial effector of EDS1-TIR-NB-LRR resistance protein interactions constitutes the first step in resistance activation. Acts redundantly with salicylic acid to regulate resistance gene-mediated signaling. Triggers early plant defenses and hypersensitive response independently of PAD4, and then recruits PAD4 to potentiate plant defenses through the accumulation of salicylic acid. Nuclear localization is essential for basal and TNL-conditioned immunity and for reprogramming defense gene expression, while cytoplasmic EDS1 is required to induce a complete immune response. Heterodimerization with PAD4 and/or SGA101 is necessary for TNL-mediated effector-triggered immunity. Contributes to nonhost resistance against E.amylovora. Loss of EDS1-PAD4 interaction compromises basal but not TNL-triggered resistance. Necessary for systemic acquired resistance (SAR) signal generation and perception. Has no direct lipase activity. Putative lipase activity is dispensable for immune functions. This Arabidopsis thaliana (Mouse-ear cress) protein is Protein EDS1.